Here is a 222-residue protein sequence, read N- to C-terminus: Elongation factor 1-beta' (222 aa).

The disordered stretch occupies residues 71 to 113 (SQGTSPLTAGAKPTAPAPAAKDDDDDDVDLFGSGDEEEDAEAE). The segment covering 78–89 (TAGAKPTAPAPA) has biased composition (low complexity). The segment covering 92–111 (DDDDDDVDLFGSGDEEEDAE) has biased composition (acidic residues).

This sequence belongs to the EF-1-beta/EF-1-delta family. As to quaternary structure, EF-1 is composed of 4 subunits: alpha, beta, beta' and gamma. Post-translationally, phosphorylated.

EF-1-beta and EF-1-beta' stimulate the exchange of GDP bound to EF-1-alpha to GTP. This chain is Elongation factor 1-beta', found in Bombyx mori (Silk moth).